Here is a 195-residue protein sequence, read N- to C-terminus: HTH-type transcriptional regulator BetI (195 aa).

The 61-residue stretch at 8–68 (SIRRRQLIDA…ATMRDITSQL (61 aa)) folds into the HTH tetR-type domain. A DNA-binding region (H-T-H motif) is located at residues 31–50 (TIAQIARRAGVSTGIISHYF).

Its pathway is amine and polyamine biosynthesis; betaine biosynthesis via choline pathway [regulation]. Functionally, repressor involved in the biosynthesis of the osmoprotectant glycine betaine. It represses transcription of the choline transporter BetT and the genes of BetAB involved in the synthesis of glycine betaine. This Escherichia coli O127:H6 (strain E2348/69 / EPEC) protein is HTH-type transcriptional regulator BetI.